The sequence spans 154 residues: Small ribosomal subunit protein uS13 (154 aa).

Belongs to the universal ribosomal protein uS13 family.

Its subcellular location is the cytoplasm. Located at the top of the head of the 40S subunit, it contacts several helices of the 18S rRNA. The polypeptide is Small ribosomal subunit protein uS13 (rps18) (Dictyostelium discoideum (Social amoeba)).